The following is a 450-amino-acid chain: UDP-N-acetylmuramoylalanine--D-glutamate ligase (450 aa).

Position 116–122 (116–122 (GSNGKTT)) interacts with ATP.

It belongs to the MurCDEF family.

Its subcellular location is the cytoplasm. It carries out the reaction UDP-N-acetyl-alpha-D-muramoyl-L-alanine + D-glutamate + ATP = UDP-N-acetyl-alpha-D-muramoyl-L-alanyl-D-glutamate + ADP + phosphate + H(+). Its pathway is cell wall biogenesis; peptidoglycan biosynthesis. Its function is as follows. Cell wall formation. Catalyzes the addition of glutamate to the nucleotide precursor UDP-N-acetylmuramoyl-L-alanine (UMA). The polypeptide is UDP-N-acetylmuramoylalanine--D-glutamate ligase (Dechloromonas aromatica (strain RCB)).